The chain runs to 542 residues: Zinc finger protein 280A (542 aa).

A disordered region spans residues 66–185; sequence VTPGSNSRRK…RDSKRVKLRD (120 aa). Positions 107-122 are enriched in polar residues; sequence EGRSTDSPVTMKSSSE. Residues 128–143 are compositionally biased toward low complexity; the sequence is SSPQVVSPSSSDSLPP. The span at 161-185 shows a compositional bias: basic and acidic residues; sequence SSPDSKRLSTSDINSRDSKRVKLRD. 4 consecutive C2H2-type zinc fingers follow at residues 334 to 357, 364 to 387, 423 to 445, and 451 to 474; these read TTCQ…DSVH, AVCK…KDHH, LLCL…CWRH, and LQCS…TKDH. The segment covering 499–520 has biased composition (polar residues); that stretch reads QPGSSGMASVIVSNTDPQSSPV. Residues 499–542 are disordered; that stretch reads QPGSSGMASVIVSNTDPQSSPVKTKKKTAMNTRDSRLPCSKDSS.

The protein localises to the nucleus. Functionally, may function as a transcription factor. In Homo sapiens (Human), this protein is Zinc finger protein 280A (ZNF280A).